A 372-amino-acid chain; its full sequence is DNA replication and repair protein RecF (372 aa).

Position 30-37 (30-37) interacts with ATP; that stretch reads GENGQGKT.

The protein belongs to the RecF family.

Its subcellular location is the cytoplasm. The RecF protein is involved in DNA metabolism; it is required for DNA replication and normal SOS inducibility. RecF binds preferentially to single-stranded, linear DNA. It also seems to bind ATP. This Anaeromyxobacter dehalogenans (strain 2CP-1 / ATCC BAA-258) protein is DNA replication and repair protein RecF.